The primary structure comprises 318 residues: Olfactory receptor 2T3 (318 aa).

Over 1-30 (MCSGNQTSQNQTASTDFTLTGLFAESKHAA) the chain is Extracellular. Residues N5 and N10 are each glycosylated (N-linked (GlcNAc...) asparagine). Residues 31–54 (LLYTVTFLLFLMALTGNALLILLI) traverse the membrane as a helical segment. Topologically, residues 55–62 (HSEPRLHT) are cytoplasmic. Residues 63–84 (PMYFFISQLALMDLMYLCVTVP) traverse the membrane as a helical segment. Topologically, residues 85-105 (KMLVGQVTGDDTISPSGCGIQ) are extracellular. C102 and C194 are disulfide-bonded. The chain crosses the membrane as a helical span at residues 106-125 (MFFYLTLAGAEVFLLAAMAY). At 126-144 (DRYAAVCRPLHYPLLMNQR) the chain is on the cytoplasmic side. Residues 145–163 (VCQLLVSACWVLGMVDGLL) traverse the membrane as a helical segment. The Extracellular segment spans residues 164–200 (LTPITMSFPFCQSRKILSFFCETPALLKLSCSDVSLY). A helical transmembrane segment spans residues 201-224 (KTLMYLCCILMLLAPIMVISSSYT). Topologically, residues 225–241 (LILHLIHRMNSAAGHRK) are cytoplasmic. A helical transmembrane segment spans residues 242-264 (ALATCSSHMIIVLLLFGASFYTY). The Extracellular segment spans residues 265–277 (MLPSSYHTAEQDM). A helical transmembrane segment spans residues 278 to 297 (MVSAFYTIFTPVLNPLIYSL). Over 298-318 (RNKDVTRALRSMMQSRMNQEK) the chain is Cytoplasmic.

Belongs to the G-protein coupled receptor 1 family.

It is found in the cell membrane. Odorant receptor. This Homo sapiens (Human) protein is Olfactory receptor 2T3 (OR2T3).